A 942-amino-acid chain; its full sequence is Valine--tRNA ligase (942 aa).

The 'HIGH' region signature appears at 43-53 (PNVTGTLHMGH). The 'KMSKS' region signature appears at 551–555 (KMSKS). Lys-554 lines the ATP pocket. The stretch at 876-942 (EGLVDLDAER…AGLREQRAKL (67 aa)) forms a coiled coil.

This sequence belongs to the class-I aminoacyl-tRNA synthetase family. ValS type 1 subfamily. As to quaternary structure, monomer.

The protein localises to the cytoplasm. It carries out the reaction tRNA(Val) + L-valine + ATP = L-valyl-tRNA(Val) + AMP + diphosphate. Catalyzes the attachment of valine to tRNA(Val). As ValRS can inadvertently accommodate and process structurally similar amino acids such as threonine, to avoid such errors, it has a 'posttransfer' editing activity that hydrolyzes mischarged Thr-tRNA(Val) in a tRNA-dependent manner. The sequence is that of Valine--tRNA ligase from Stenotrophomonas maltophilia (strain R551-3).